The chain runs to 391 residues: Putative protein PLEKHA9 (391 aa).

The sequence is that of Putative protein PLEKHA9 (PLEKHA8P1) from Homo sapiens (Human).